We begin with the raw amino-acid sequence, 282 residues long: Urease accessory protein UreD (282 aa).

This sequence belongs to the UreD family. As to quaternary structure, ureD, UreF and UreG form a complex that acts as a GTP-hydrolysis-dependent molecular chaperone, activating the urease apoprotein by helping to assemble the nickel containing metallocenter of UreC. The UreE protein probably delivers the nickel.

The protein localises to the cytoplasm. Required for maturation of urease via the functional incorporation of the urease nickel metallocenter. The sequence is that of Urease accessory protein UreD from Methylobacterium sp. (strain 4-46).